Reading from the N-terminus, the 142-residue chain is MAKKVTGYLKLQVPAGAANPSPPIGPALGQRGLNIMEFCKAFNAQTQKEEKNTPIPVVITIYADRSFTFEMKTPPMAYFLKQAAKIQSGSKTPGRDAAGTLTRAQVREIAEKKMKDLNCDTVEAAMSMVEGSARSMGLQVAE.

This sequence belongs to the universal ribosomal protein uL11 family. As to quaternary structure, part of the ribosomal stalk of the 50S ribosomal subunit. Interacts with L10 and the large rRNA to form the base of the stalk. L10 forms an elongated spine to which L12 dimers bind in a sequential fashion forming a multimeric L10(L12)X complex. Post-translationally, one or more lysine residues are methylated.

Forms part of the ribosomal stalk which helps the ribosome interact with GTP-bound translation factors. In Nitrobacter winogradskyi (strain ATCC 25391 / DSM 10237 / CIP 104748 / NCIMB 11846 / Nb-255), this protein is Large ribosomal subunit protein uL11.